A 78-amino-acid polypeptide reads, in one-letter code: Large ribosomal subunit protein eL20 (78 aa).

This sequence belongs to the eukaryotic ribosomal protein eL20 family. Part of the 50S ribosomal subunit. Binds 23S rRNA.

The polypeptide is Large ribosomal subunit protein eL20 (Thermococcus sibiricus (strain DSM 12597 / MM 739)).